We begin with the raw amino-acid sequence, 309 residues long: Metal ABC transporter substrate-binding lipoprotein SsaB (309 aa).

The signal sequence occupies residues 1-19 (MKKLGFLSLLLLAVCTLFA). The N-palmitoyl cysteine moiety is linked to residue Cys20. Cys20 carries S-diacylglycerol cysteine lipidation. A divalent metal cation-binding residues include His67, His139, Glu205, and Asp280.

The protein belongs to the bacterial solute-binding protein 9 family. Lipoprotein receptor antigen (Lrai) subfamily. In terms of assembly, homodimer and homotrimer.

The protein resides in the cell membrane. In terms of biological role, part of an ATP-binding cassette (ABC) transport system involved in metal import. Binds a metal with high affinity and specificity and delivers it to the membrane permease for translocation into the cytoplasm. Also acts as an adhesin which is involved on adherence to extracellular matrix. It is an important factor in the pathogenesis and infection. May contribute to the formation and accumulation of dental plaque. The sequence is that of Metal ABC transporter substrate-binding lipoprotein SsaB (ssaB) from Streptococcus sanguinis.